A 172-amino-acid polypeptide reads, in one-letter code: AIG2-like protein C (172 aa).

A substrate-binding site is contributed by Y13 to E18. The active-site Proton acceptor is E81.

The protein belongs to the gamma-glutamylcyclotransferase family. As to expression, expressed in flowers, leaves, stems and roots.

Its function is as follows. Putative gamma-glutamylcyclotransferase. The chain is AIG2-like protein C from Arabidopsis thaliana (Mouse-ear cress).